A 626-amino-acid chain; its full sequence is Chaperone protein HtpG (626 aa).

The tract at residues 1-332 (MTNNDTPGMR…TEDLPLNVSR (332 aa)) is a; substrate-binding. The b stretch occupies residues 333–546 (EVVQSSKVMA…KDSLDSSMEK (214 aa)). The tract at residues 547–626 (MMKMMHAEMP…ELIEAATMSR (80 aa)) is c.

The protein belongs to the heat shock protein 90 family. In terms of assembly, homodimer.

It localises to the cytoplasm. Functionally, molecular chaperone. Has ATPase activity. This chain is Chaperone protein HtpG, found in Chlorobium phaeobacteroides (strain DSM 266 / SMG 266 / 2430).